The chain runs to 378 residues: Cytochrome P450 monooxygenase pytD (378 aa).

Heme is bound at residue Cys-321.

This sequence belongs to the cytochrome P450 family. The cofactor is heme.

The protein operates within secondary metabolite biosynthesis. Functionally, cytochrome P450 monooxygenase pytD; part of the gene cluster that mediates the biosynthesis of pyranterreones, a family of antioxidative compounds. The first step of pyranonigrins biosynthesis is performed by the hybrid PKS-NRPS synthetase pytA that condenses 4 malonyl-CoA units ato the acetyl starter unit by the modular PKS of pytA. The acyl chain is then connected to an L-serine through the amide bond by the modular NRPS of pytA. A tetramic acid is formed and released from the PKS-NRPS pytA to give pyranterreone 5 with the help of the thioesterase pytI. Pyranterreone 5 could be methylated by pytC to afford pyranterreone 6. Both pyranterreones 5 and 6 are subsequently oxidized by the FAD-linked oxidoreductase pytB and the cytochrome P450 monooxygenase pytD to form the fused gamma-pyrone core, resulting in pyranterreones 7 and 11, respectively. The hydroxy group at C-8 of pyranterreones 7 and 11 are dehydrated by the aspartyl protease pytH to form a delta-7 double bond to give pyranterreones 3 and 1, 2 accordingly. The exo-methylene of pyranterreone 3 could be reduced into a pendant methyl by reductase pytE to provide pyranterreone 4, also known as cordylactam. Pyranterreone 4 can be reconverted to pyranterreone 3 through pytB-catalyzed dehydrogenation or further oxidized to pyranterreones 9 and 10. The chain is Cytochrome P450 monooxygenase pytD from Aspergillus terreus (strain NIH 2624 / FGSC A1156).